A 57-amino-acid chain; its full sequence is Mambaquaretin-1 (57 aa).

Positions 5–55 constitute a BPTI/Kunitz inhibitor domain; sequence CNLPVKPGPCNGFFSAFYYSQKTNKCHSFTYGGCKGNANRFSTIEKCRRTC. Intrachain disulfides connect Cys-5/Cys-55, Cys-14/Cys-38, and Cys-30/Cys-51. Residues 15–16 form an important for binding V2R region; it reads NG.

Belongs to the venom Kunitz-type family. As to expression, expressed by the venom gland.

It localises to the secreted. Its function is as follows. Selectively interacts with vasopressin V2 receptor (V2R/AVPR2) and fully inhibits three major signaling pathways of this receptor that are GalphaS protein, the interaction with beta-arrestin and activation of MAP kinase. Inhibits vasopressin binding human V2R in the nanomolar range (Ki=5.02 nM), and also potently inhibits vasopressin-induced cAMP production (IC(50)=94 nM). In vivo, this protein shows an aquaretic effect. Urine output increases and urine osmolality decreases dramatically under treatment with this protein, without differences observed between healthy mice and the pcy mice model of the autosomal-dominant polycystic kidney disease (ADPKD). This protein does not modify electrolyte, protein and urea excretions in the urine samples, but produces a 3-fold decrease of creatinine levels. Intraperitoneal injection of this protein into the pcy mice significantly reduces the number of renal cysts and the total area of cysts. This protein also shows high efficacy in preventing hyponatremia in rat models (induced by DAVP). Is highly visible in mice liver and kidney after intravenous injection. Is rapidly eliminated in the liver, whereas it exhibits slow elimination in the kidney due to the high expression of V2R which acts as a reservoir. In addition, its elimination from blood is rapid. Fluorescent MQ1 probes could also be used for imaging V2R-overexpressing cancer cells; note that these probes label the three renal cancer cell lines CAKI-2, ACHN and A498 that highly express V2R. In vivo, does not show any toxicity on animals, even at highest doses tested, such as prostration, spidy coat, appetite or weight loss. This chain is Mambaquaretin-1, found in Dendroaspis angusticeps (Eastern green mamba).